We begin with the raw amino-acid sequence, 396 residues long: ATP-dependent RNA helicase eIF4A (396 aa).

The disordered stretch occupies residues 1 to 20 (MADKGLEDVPEGQIESNYDE). The Q motif signature appears at 23-51 (DSFDAMNLKAELLRGVYAYGFERPSAIQQ). A Helicase ATP-binding domain is found at 54–224 (IMPVIKGHDV…TKFMRDPVRI (171 aa)). 67–74 (AQSGTGKT) is a binding site for ATP. The short motif at 172-175 (DEAD) is the DEAD box element. A Helicase C-terminal domain is found at 235 to 396 (GIKQFYIAVE…EMPMNVADLI (162 aa)).

Belongs to the DEAD box helicase family. eIF4A subfamily. Component of the eIF4F complex, which composition varies with external and internal environmental conditions. It is composed of at least eIF4A, eIF4E and eIF4G.

Its subcellular location is the cytoplasm. The enzyme catalyses ATP + H2O = ADP + phosphate + H(+). Its function is as follows. ATP-dependent RNA helicase which is a subunit of the eIF4F complex involved in cap recognition and is required for mRNA binding to ribosome. In the current model of translation initiation, eIF4A unwinds RNA secondary structures in the 5'-UTR of mRNAs which is necessary to allow efficient binding of the small ribosomal subunit, and subsequent scanning for the initiator codon. In Phaeosphaeria nodorum (strain SN15 / ATCC MYA-4574 / FGSC 10173) (Glume blotch fungus), this protein is ATP-dependent RNA helicase eIF4A (TIF1).